Consider the following 443-residue polypeptide: Acyl transferase 10 (443 aa).

Residues histidine 182 and aspartate 386 each act as proton acceptor in the active site.

Belongs to the plant acyltransferase family.

In terms of biological role, involved in the incorporation of ferulate into the cell wall. May act as arabinoxylan feruloyl transferase. May function as p-coumaroyl-CoA transferase involved in glucuronoarabinoxylan modification. The sequence is that of Acyl transferase 10 from Oryza sativa subsp. japonica (Rice).